The chain runs to 165 residues: Thiol peroxidase (165 aa).

The 147-residue stretch at 18–164 (RKVGDKAPNF…YEAAIEAAKK (147 aa)) folds into the Thioredoxin domain. The active-site Cysteine sulfenic acid (-SOH) intermediate is the cysteine 60. Residues cysteine 60 and cysteine 94 are joined by a disulfide bond.

Belongs to the peroxiredoxin family. Tpx subfamily. As to quaternary structure, homodimer.

The enzyme catalyses a hydroperoxide + [thioredoxin]-dithiol = an alcohol + [thioredoxin]-disulfide + H2O. In terms of biological role, thiol-specific peroxidase that catalyzes the reduction of hydrogen peroxide and organic hydroperoxides to water and alcohols, respectively. Plays a role in cell protection against oxidative stress by detoxifying peroxides. The polypeptide is Thiol peroxidase (Listeria innocua serovar 6a (strain ATCC BAA-680 / CLIP 11262)).